The following is a 316-amino-acid chain: ADDLTTLRNGTLDRGITPDCTFNEKDIELHVYSRDKRNGIILKKEILKNYDLFQKSQISHQIAILIHGFLSTGNNENFDAMAKALIEIDNFLVISVDWKKGACNAFASTNDVLGYSQAVGNTRHVGKYVADFTKLLVEQYKVPMSNIRLIGHSLGAHTSGFAGKEVQRLKLGKYKEIIGLDPAGPSFLTSKCPDRLCETDAEYVQAIHTSAILGVYYNVGSVDFYVNYGKSQPGCSEPSCSHTKAVKYLTECIKRECCLIGTPWKSYFSTPKPISQCKRDTCVCVGLNAQSYPAKGSFYVPVDKDAPYCHNEGIKL.

The first 4 residues, 1–4 (ADDL), serve as a signal peptide directing secretion. Positions 5–14 (TTLRNGTLDR) are excised as a propeptide. A disulfide bridge links C20 with C103. S153 acts as the Nucleophile in catalysis. D181 serves as the catalytic Charge relay system. Disulfide bonds link C192/C197 and C235/C240. The Charge relay system role is filled by H242. 3 cysteine pairs are disulfide-bonded: C257–C284, C258–C309, and C277–C282.

Belongs to the AB hydrolase superfamily. Lipase family. Expressed by the venom gland.

It is found in the secreted. The enzyme catalyses a 1,2-diacyl-sn-glycero-3-phosphocholine + H2O = a 2-acyl-sn-glycero-3-phosphocholine + a fatty acid + H(+). Its function is as follows. Catalyzes the hydrolysis of phosphatidylcholine with phospholipase A1 activity. May act as an allergen and induce hemolytic activity. The polypeptide is Phospholipase A1 3 (Polistes dominula (European paper wasp)).